Here is a 616-residue protein sequence, read N- to C-terminus: Chaperone protein HscA (616 aa).

This sequence belongs to the heat shock protein 70 family.

In terms of biological role, chaperone involved in the maturation of iron-sulfur cluster-containing proteins. Has a low intrinsic ATPase activity which is markedly stimulated by HscB. Involved in the maturation of IscU. This is Chaperone protein HscA from Shigella flexneri serotype 5b (strain 8401).